The primary structure comprises 93 residues: Small ribosomal subunit protein uS19 (93 aa).

The protein belongs to the universal ribosomal protein uS19 family.

Its function is as follows. Protein S19 forms a complex with S13 that binds strongly to the 16S ribosomal RNA. In Alkaliphilus oremlandii (strain OhILAs) (Clostridium oremlandii (strain OhILAs)), this protein is Small ribosomal subunit protein uS19.